A 192-amino-acid chain; its full sequence is uncharacterized protein (192 aa).

A disordered region spans residues 17–73 (MLRGSGKKPIQRLAKAPAATASSKTSEWRATTAYGFLPAGGDVRPHSPRYESQGVLS). Low complexity predominate over residues 30 to 41 (AKAPAATASSKT).

This is an uncharacterized protein from Sinorhizobium fredii (strain NBRC 101917 / NGR234).